The sequence spans 149 residues: Large ribosomal subunit protein bL9 (149 aa).

The protein belongs to the bacterial ribosomal protein bL9 family.

Functionally, binds to the 23S rRNA. The chain is Large ribosomal subunit protein bL9 from Legionella pneumophila (strain Lens).